A 485-amino-acid chain; its full sequence is Membrane-bound lytic murein transglycosylase F (485 aa).

A signal peptide spans methionine 1 to glutamate 29. The interval lysine 30–valine 267 is non-LT domain. An LT domain region spans residues aspartate 268–methionine 485. The active site involves glutamate 314. Residues glutamate 465–methionine 485 are disordered.

The protein in the N-terminal section; belongs to the bacterial solute-binding protein 3 family. In the C-terminal section; belongs to the transglycosylase Slt family.

Its subcellular location is the cell outer membrane. It catalyses the reaction Exolytic cleavage of the (1-&gt;4)-beta-glycosidic linkage between N-acetylmuramic acid (MurNAc) and N-acetylglucosamine (GlcNAc) residues in peptidoglycan, from either the reducing or the non-reducing ends of the peptidoglycan chains, with concomitant formation of a 1,6-anhydrobond in the MurNAc residue.. Functionally, murein-degrading enzyme that degrades murein glycan strands and insoluble, high-molecular weight murein sacculi, with the concomitant formation of a 1,6-anhydromuramoyl product. Lytic transglycosylases (LTs) play an integral role in the metabolism of the peptidoglycan (PG) sacculus. Their lytic action creates space within the PG sacculus to allow for its expansion as well as for the insertion of various structures such as secretion systems and flagella. The protein is Membrane-bound lytic murein transglycosylase F of Pseudomonas putida (strain GB-1).